Reading from the N-terminus, the 513-residue chain is Glucose-6-phosphate 1-dehydrogenase 2 (513 aa).

The residue at position 2 (alanine 2) is an N-acetylalanine. Serine 8 bears the Phosphoserine mark. Phosphothreonine is present on threonine 10. Residues 38-45 (GASGDLAK) and arginine 72 each bind NADP(+). Lysine 89 is subject to N6-acetyllysine. Positions 147 and 171 each coordinate NADP(+). D-glucose 6-phosphate is bound by residues lysine 171, 201 to 205 (HYLDK), glutamate 239, and aspartate 258. An N6-(2-hydroxyisobutyryl)lysine; alternate modification is found at lysine 171. Residue lysine 171 is modified to N6-acetyllysine; alternate. Histidine 263 (proton acceptor) is an active-site residue. Arginine 357 serves as a coordination point for NADP(+). D-glucose 6-phosphate contacts are provided by lysine 360 and arginine 365. NADP(+) contacts are provided by lysine 366, arginine 370, and arginine 393. Glutamine 395 is a binding site for D-glucose 6-phosphate. 421 to 423 (DLT) contributes to the NADP(+) binding site. Lysine 432 carries the post-translational modification N6-acetyllysine. Residues arginine 487 and tyrosine 503 each coordinate NADP(+). Position 503 is a phosphotyrosine (tyrosine 503).

It belongs to the glucose-6-phosphate dehydrogenase family. As to quaternary structure, homotetramer; dimer of dimers. Interacts with SIRT2; the interaction is enhanced by H(2)O(2) treatment. Post-translationally, acetylated by ELP3; acetylation inhibits its homodimerization and enzyme activity. Deacetylated by SIRT2; deacetylation stimulates its enzyme activity. In terms of tissue distribution, testis.

The protein resides in the cytoplasm. It is found in the cytosol. Its subcellular location is the membrane. The catalysed reaction is D-glucose 6-phosphate + NADP(+) = 6-phospho-D-glucono-1,5-lactone + NADPH + H(+). It functions in the pathway carbohydrate degradation; pentose phosphate pathway; D-ribulose 5-phosphate from D-glucose 6-phosphate (oxidative stage): step 1/3. In terms of biological role, catalyzes the rate-limiting step of the oxidative pentose-phosphate pathway, which represents a route for the dissimilation of carbohydrates besides glycolysis. The main function of this enzyme is to provide reducing power (NADPH) and pentose phosphates for fatty acid and nucleic acid synthesis. The sequence is that of Glucose-6-phosphate 1-dehydrogenase 2 (G6pd2) from Mus musculus (Mouse).